The chain runs to 165 residues: Chorismate pyruvate-lyase (165 aa).

Substrate-binding residues include Met-35, Arg-77, Leu-115, and Glu-156.

This sequence belongs to the UbiC family. As to quaternary structure, monomer.

Its subcellular location is the cytoplasm. The enzyme catalyses chorismate = 4-hydroxybenzoate + pyruvate. It functions in the pathway cofactor biosynthesis; ubiquinone biosynthesis. Functionally, removes the pyruvyl group from chorismate, with concomitant aromatization of the ring, to provide 4-hydroxybenzoate (4HB) for the ubiquinone pathway. The polypeptide is Chorismate pyruvate-lyase (Shigella sonnei (strain Ss046)).